A 740-amino-acid chain; its full sequence is Elongation factor 2 (740 aa).

The region spanning Ala-23 to Asn-264 is the tr-type G domain. GTP-binding positions include Ala-32–Thr-39, Asp-98–His-102, and Asn-152–Asp-155. His-605 carries the diphthamide modification.

Belongs to the TRAFAC class translation factor GTPase superfamily. Classic translation factor GTPase family. EF-G/EF-2 subfamily.

It is found in the cytoplasm. In terms of biological role, catalyzes the GTP-dependent ribosomal translocation step during translation elongation. During this step, the ribosome changes from the pre-translocational (PRE) to the post-translocational (POST) state as the newly formed A-site-bound peptidyl-tRNA and P-site-bound deacylated tRNA move to the P and E sites, respectively. Catalyzes the coordinated movement of the two tRNA molecules, the mRNA and conformational changes in the ribosome. This Pyrobaculum neutrophilum (strain DSM 2338 / JCM 9278 / NBRC 100436 / V24Sta) (Thermoproteus neutrophilus) protein is Elongation factor 2.